Here is a 208-residue protein sequence, read N- to C-terminus: Segregation and condensation protein B (208 aa).

The protein belongs to the ScpB family. In terms of assembly, homodimer. Homodimerization may be required to stabilize the binding of ScpA to the Smc head domains. Component of a cohesin-like complex composed of ScpA, ScpB and the Smc homodimer, in which ScpA and ScpB bind to the head domain of Smc. The presence of the three proteins is required for the association of the complex with DNA.

The protein resides in the cytoplasm. Participates in chromosomal partition during cell division. May act via the formation of a condensin-like complex containing Smc and ScpA that pull DNA away from mid-cell into both cell halves. In Mycoplasma pneumoniae (strain ATCC 29342 / M129 / Subtype 1) (Mycoplasmoides pneumoniae), this protein is Segregation and condensation protein B.